A 332-amino-acid polypeptide reads, in one-letter code: Anthranilate phosphoribosyltransferase (332 aa).

5-phospho-alpha-D-ribose 1-diphosphate is bound by residues glycine 79, 82 to 83 (GD), serine 87, 89 to 92 (NIST), 107 to 115 (KHGNRSVSS), and serine 119. An anthranilate-binding site is contributed by glycine 79. Residue serine 91 participates in Mg(2+) binding. Asparagine 110 serves as a coordination point for anthranilate. Residue arginine 165 coordinates anthranilate. Mg(2+) is bound by residues aspartate 223 and glutamate 224.

Belongs to the anthranilate phosphoribosyltransferase family. Homodimer. Requires Mg(2+) as cofactor.

It catalyses the reaction N-(5-phospho-beta-D-ribosyl)anthranilate + diphosphate = 5-phospho-alpha-D-ribose 1-diphosphate + anthranilate. It participates in amino-acid biosynthesis; L-tryptophan biosynthesis; L-tryptophan from chorismate: step 2/5. Its function is as follows. Catalyzes the transfer of the phosphoribosyl group of 5-phosphorylribose-1-pyrophosphate (PRPP) to anthranilate to yield N-(5'-phosphoribosyl)-anthranilate (PRA). The protein is Anthranilate phosphoribosyltransferase of Serratia proteamaculans (strain 568).